A 185-amino-acid polypeptide reads, in one-letter code: Elongation factor P (185 aa).

Belongs to the elongation factor P family.

The protein resides in the cytoplasm. It functions in the pathway protein biosynthesis; polypeptide chain elongation. Functionally, involved in peptide bond synthesis. Stimulates efficient translation and peptide-bond synthesis on native or reconstituted 70S ribosomes in vitro. Probably functions indirectly by altering the affinity of the ribosome for aminoacyl-tRNA, thus increasing their reactivity as acceptors for peptidyl transferase. This Mesomycoplasma hyopneumoniae (strain 232) (Mycoplasma hyopneumoniae) protein is Elongation factor P.